The primary structure comprises 89 residues: Small ribosomal subunit protein uS15 (89 aa).

It belongs to the universal ribosomal protein uS15 family. As to quaternary structure, part of the 30S ribosomal subunit. Forms a bridge to the 50S subunit in the 70S ribosome, contacting the 23S rRNA.

Functionally, one of the primary rRNA binding proteins, it binds directly to 16S rRNA where it helps nucleate assembly of the platform of the 30S subunit by binding and bridging several RNA helices of the 16S rRNA. Forms an intersubunit bridge (bridge B4) with the 23S rRNA of the 50S subunit in the ribosome. This chain is Small ribosomal subunit protein uS15, found in Arthrobacter sp. (strain FB24).